Consider the following 449-residue polypeptide: Glucose-6-phosphate isomerase (449 aa).

Threonine 38 is modified (phosphothreonine). Glutamate 290 acts as the Proton donor in catalysis. Active-site residues include histidine 311 and lysine 425.

The protein belongs to the GPI family.

It is found in the cytoplasm. The catalysed reaction is alpha-D-glucose 6-phosphate = beta-D-fructose 6-phosphate. Its pathway is carbohydrate biosynthesis; gluconeogenesis. It participates in carbohydrate degradation; glycolysis; D-glyceraldehyde 3-phosphate and glycerone phosphate from D-glucose: step 2/4. Catalyzes the reversible isomerization of glucose-6-phosphate to fructose-6-phosphate. This Geobacillus thermodenitrificans (strain NG80-2) protein is Glucose-6-phosphate isomerase.